Reading from the N-terminus, the 383-residue chain is Hippurate hydrolase (383 aa).

It belongs to the peptidase M20 family.

The catalysed reaction is N-benzoylglycine + H2O = benzoate + glycine. In terms of biological role, cleaves hippuric acid into benzoic acid and glycine. The polypeptide is Hippurate hydrolase (Campylobacter jejuni subsp. jejuni serotype O:2 (strain ATCC 700819 / NCTC 11168)).